The sequence spans 308 residues: tRNA dimethylallyltransferase (308 aa).

An ATP-binding site is contributed by Gly-14–Thr-21. Thr-16 to Thr-21 is a substrate binding site. Interaction with substrate tRNA stretches follow at residues Asp-39 to Leu-42, Gln-163 to Arg-167, and Arg-244 to Arg-249.

It belongs to the IPP transferase family. In terms of assembly, monomer. The cofactor is Mg(2+).

The enzyme catalyses adenosine(37) in tRNA + dimethylallyl diphosphate = N(6)-dimethylallyladenosine(37) in tRNA + diphosphate. Its function is as follows. Catalyzes the transfer of a dimethylallyl group onto the adenine at position 37 in tRNAs that read codons beginning with uridine, leading to the formation of N6-(dimethylallyl)adenosine (i(6)A). This Shewanella oneidensis (strain ATCC 700550 / JCM 31522 / CIP 106686 / LMG 19005 / NCIMB 14063 / MR-1) protein is tRNA dimethylallyltransferase.